We begin with the raw amino-acid sequence, 1520 residues long: Protein TALPID3 (1520 aa).

The tract at residues 322–370 is disordered; the sequence is LSEDTDFDGQKSPLETPAPRRFAPVPVSRDGKITKRESPTEEKENMEMN. A compositionally biased stretch (basic and acidic residues) spans 350-367; the sequence is RDGKITKRESPTEEKENM. Ser426 carries the post-translational modification Phosphoserine. Residues 485–572 are required for centrosomal localization; that stretch reads SVLKDAAKIL…YEQKRFDPKN (88 aa). The stretch at 487-519 forms a coiled coil; that stretch reads LKDAAKILRGVQNNKKVLEENLEAIVRAKDGAA. 7 disordered regions span residues 568–632, 759–793, 826–848, 1060–1093, 1145–1170, 1184–1230, and 1500–1520; these read FDPK…RSGL, NSDS…NAGV, VSYS…LPPL, TPQP…PDAA, SSPE…SLQE, EEPE…ENTL, and SQSL…TDTF. Polar residues-rich tracts occupy residues 587–596 and 605–616; these read ANNQEKTVNR and QKQTQEQFTSPP. The segment covering 826–836 has biased composition (polar residues); it reads VSYSSTDGASS. 2 positions are modified to phosphothreonine: Thr1060 and Thr1064. The span at 1060-1069 shows a compositional bias: pro residues; sequence TPQPTPPCSP. Residue Ser1068 is modified to Phosphoserine. Thr1080 carries the phosphothreonine modification. Ser1083 is subject to Phosphoserine. The segment covering 1195–1205 has biased composition (pro residues); sequence PAPPEPAPSAP. The segment covering 1217–1230 has biased composition (polar residues); the sequence is RVPSSGSSTLENTL.

It belongs to the TALPID3 family. In terms of assembly, interacts with CEP120. Interacts with CCP110, CEP290, CEP97, KIF24. Expressed in photoreceptor cells (at protein level).

It localises to the cytoplasm. The protein localises to the cytoskeleton. Its subcellular location is the microtubule organizing center. The protein resides in the centrosome. It is found in the photoreceptor inner segment. It localises to the centriole. The protein localises to the cilium basal body. Functionally, required for ciliogenesis and sonic hedgehog/SHH signaling. Required for the centrosomal recruitment of RAB8A and for the targeting of centriole satellite proteins to centrosomes such as of PCM1. May play a role in early ciliogenesis in the disappearance of centriolar satellites that preceeds ciliary vesicle formation. Involved in regulation of cell intracellular organization. Involved in regulation of cell polarity. Required for asymmetrical localization of CEP120 to daughter centrioles. The polypeptide is Protein TALPID3 (Talpid3) (Mus musculus (Mouse)).